The chain runs to 116 residues: Large ribosomal subunit protein bL19 (116 aa).

It belongs to the bacterial ribosomal protein bL19 family.

Its function is as follows. This protein is located at the 30S-50S ribosomal subunit interface and may play a role in the structure and function of the aminoacyl-tRNA binding site. The sequence is that of Large ribosomal subunit protein bL19 from Pseudomonas savastanoi pv. phaseolicola (strain 1448A / Race 6) (Pseudomonas syringae pv. phaseolicola (strain 1448A / Race 6)).